Reading from the N-terminus, the 200-residue chain is Riboflavin kinase (200 aa).

Positions 1–20 (MATARPSIVGPDSGPESPFP) are disordered. Thr42 and Asn44 together coordinate Mg(2+). Glu110 functions as the Nucleophile in the catalytic mechanism.

This sequence belongs to the flavokinase family. Zn(2+) is required as a cofactor. The cofactor is Mg(2+).

The enzyme catalyses riboflavin + ATP = FMN + ADP + H(+). Its pathway is cofactor biosynthesis; FMN biosynthesis; FMN from riboflavin (ATP route): step 1/1. Catalyzes the phosphorylation of riboflavin (vitamin B2) to form flavin mononucleotide (FMN) coenzyme. In Pyricularia oryzae (strain 70-15 / ATCC MYA-4617 / FGSC 8958) (Rice blast fungus), this protein is Riboflavin kinase (FMN1).